The sequence spans 126 residues: Arginine decarboxylase proenzyme (126 aa).

Ser74 functions as the Schiff-base intermediate with substrate; via pyruvic acid in the catalytic mechanism. Ser74 carries the pyruvic acid (Ser); by autocatalysis modification. His79 (proton acceptor; for processing activity) is an active-site residue. Cys94 functions as the Proton donor; for catalytic activity in the catalytic mechanism.

This sequence belongs to the prokaryotic AdoMetDC family. Type 1 subfamily. Heterooctamer of four alpha and four beta chains arranged as a tetramer of alpha/beta heterodimers. Requires pyruvate as cofactor. Post-translationally, is synthesized initially as an inactive proenzyme. Formation of the active enzyme involves a self-maturation process in which the active site pyruvoyl group is generated from an internal serine residue via an autocatalytic post-translational modification. Two non-identical subunits are generated from the proenzyme in this reaction, and the pyruvate is formed at the N-terminus of the alpha chain, which is derived from the carboxyl end of the proenzyme. The post-translation cleavage follows an unusual pathway, termed non-hydrolytic serinolysis, in which the side chain hydroxyl group of the serine supplies its oxygen atom to form the C-terminus of the beta chain, while the remainder of the serine residue undergoes an oxidative deamination to produce ammonia and the pyruvoyl group blocking the N-terminus of the alpha chain.

The enzyme catalyses L-arginine + H(+) = agmatine + CO2. It functions in the pathway amine and polyamine biosynthesis; agmatine biosynthesis; agmatine from L-arginine: step 1/1. Specifically catalyzes the decarboxylation of L-arginine to agmatine. Has no S-adenosylmethionine decarboxylase (AdoMetDC) activity. The protein is Arginine decarboxylase proenzyme of Pyrobaculum aerophilum (strain ATCC 51768 / DSM 7523 / JCM 9630 / CIP 104966 / NBRC 100827 / IM2).